The primary structure comprises 338 residues: RNA 3'-terminal phosphate cyclase (338 aa).

ATP is bound by residues Gln103 and Tyr283–Gln287. Catalysis depends on His308, which acts as the Tele-AMP-histidine intermediate.

Belongs to the RNA 3'-terminal cyclase family. Type 1 subfamily.

It is found in the cytoplasm. It carries out the reaction a 3'-end 3'-phospho-ribonucleotide-RNA + ATP = a 3'-end 2',3'-cyclophospho-ribonucleotide-RNA + AMP + diphosphate. In terms of biological role, catalyzes the conversion of 3'-phosphate to a 2',3'-cyclic phosphodiester at the end of RNA. The mechanism of action of the enzyme occurs in 3 steps: (A) adenylation of the enzyme by ATP; (B) transfer of adenylate to an RNA-N3'P to produce RNA-N3'PP5'A; (C) and attack of the adjacent 2'-hydroxyl on the 3'-phosphorus in the diester linkage to produce the cyclic end product. The biological role of this enzyme is unknown but it is likely to function in some aspects of cellular RNA processing. The chain is RNA 3'-terminal phosphate cyclase from Escherichia coli O6:H1 (strain CFT073 / ATCC 700928 / UPEC).